Consider the following 104-residue polypeptide: uncharacterized protein (104 aa).

The protein resides in the mitochondrion. This is an uncharacterized protein from Claviceps purpurea (Ergot fungus).